Here is a 350-residue protein sequence, read N- to C-terminus: tRNA uridine(34) hydroxylase (350 aa).

Positions 146–240 (DDPDAVFIDM…YARRARAQGL (95 aa)) constitute a Rhodanese domain. Cys-200 serves as the catalytic Cysteine persulfide intermediate. Residues 319-328 (RRRRAGRENG) are compositionally biased toward basic and acidic residues. Positions 319-350 (RRRRAGRENGNKIFNKSRGRLNSKLSIPDPAE) are disordered.

This sequence belongs to the TrhO family.

The enzyme catalyses uridine(34) in tRNA + AH2 + O2 = 5-hydroxyuridine(34) in tRNA + A + H2O. Functionally, catalyzes oxygen-dependent 5-hydroxyuridine (ho5U) modification at position 34 in tRNAs. The chain is tRNA uridine(34) hydroxylase from Salmonella typhimurium (strain LT2 / SGSC1412 / ATCC 700720).